The primary structure comprises 87 residues: Phosphoribosyl-ATP pyrophosphatase (87 aa).

This sequence belongs to the PRA-PH family.

It is found in the cytoplasm. It carries out the reaction 1-(5-phospho-beta-D-ribosyl)-ATP + H2O = 1-(5-phospho-beta-D-ribosyl)-5'-AMP + diphosphate + H(+). It participates in amino-acid biosynthesis; L-histidine biosynthesis; L-histidine from 5-phospho-alpha-D-ribose 1-diphosphate: step 2/9. This is Phosphoribosyl-ATP pyrophosphatase from Bifidobacterium animalis subsp. lactis (strain AD011).